A 216-amino-acid polypeptide reads, in one-letter code: Pyrophosphatase PpaX (216 aa).

Asp-9 functions as the Nucleophile in the catalytic mechanism.

It belongs to the HAD-like hydrolase superfamily. PpaX family. Mg(2+) serves as cofactor.

The enzyme catalyses diphosphate + H2O = 2 phosphate + H(+). In terms of biological role, hydrolyzes pyrophosphate formed during P-Ser-HPr dephosphorylation by HPrK/P. Might play a role in controlling the intracellular pyrophosphate pool. In Bacillus cereus (strain G9842), this protein is Pyrophosphatase PpaX.